Here is a 236-residue protein sequence, read N- to C-terminus: uncharacterized protein (236 aa).

A disordered region spans residues 1-29 (MNNEKNKQDRENLNRQDERKSSEIKSERK).

This is an uncharacterized protein from Staphylococcus aureus.